The primary structure comprises 270 residues: 4-hydroxy-tetrahydrodipicolinate reductase (270 aa).

Residues 9–14 (GAGGRM) and Glu-35 contribute to the NAD(+) site. Arg-36 is an NADP(+) binding site. NAD(+)-binding positions include 99–101 (GTT) and 123–126 (ASNY). Residue His-156 is the Proton donor/acceptor of the active site. A (S)-2,3,4,5-tetrahydrodipicolinate-binding site is contributed by His-157. Lys-160 acts as the Proton donor in catalysis. A (S)-2,3,4,5-tetrahydrodipicolinate-binding site is contributed by 166–167 (GT).

It belongs to the DapB family.

It localises to the cytoplasm. The catalysed reaction is (S)-2,3,4,5-tetrahydrodipicolinate + NAD(+) + H2O = (2S,4S)-4-hydroxy-2,3,4,5-tetrahydrodipicolinate + NADH + H(+). It carries out the reaction (S)-2,3,4,5-tetrahydrodipicolinate + NADP(+) + H2O = (2S,4S)-4-hydroxy-2,3,4,5-tetrahydrodipicolinate + NADPH + H(+). The protein operates within amino-acid biosynthesis; L-lysine biosynthesis via DAP pathway; (S)-tetrahydrodipicolinate from L-aspartate: step 4/4. Functionally, catalyzes the conversion of 4-hydroxy-tetrahydrodipicolinate (HTPA) to tetrahydrodipicolinate. The polypeptide is 4-hydroxy-tetrahydrodipicolinate reductase (Actinobacillus succinogenes (strain ATCC 55618 / DSM 22257 / CCUG 43843 / 130Z)).